The following is a 224-amino-acid chain: LOB domain-containing protein 15 (224 aa).

Positions 44–145 constitute an LOB domain; that stretch reads TPCAACKLLR…AELTAVRSEI (102 aa). Residues 171-224 form a disordered region; sequence SGGVSVIAPPPQRPTTPPQPTTAHPPSPSSCVFSQPTTRDLEYGNIESENNYFG. A compositionally biased stretch (pro residues) spans 178 to 198; the sequence is APPPQRPTTPPQPTTAHPPSP.

Belongs to the LOB domain-containing protein family. As to expression, expressed in young shoots, roots, stems, leaves and flowers.

This Arabidopsis thaliana (Mouse-ear cress) protein is LOB domain-containing protein 15 (LBD15).